The chain runs to 125 residues: Cu-Zn superoxide dismutase-like protein (125 aa).

A disulfide bridge connects residues C52 and C102.

The protein belongs to the Cu-Zn superoxide dismutase family.

It localises to the host cytoplasm. Functionally, virion protein with no enzymatic activity. In Mus musculus (Mouse), this protein is Cu-Zn superoxide dismutase-like protein.